A 246-amino-acid chain; its full sequence is Type III pantothenate kinase (246 aa).

Residue 6 to 13 (DVGNTHSV) participates in ATP binding. 103–106 (GADR) serves as a coordination point for substrate. Asp-105 serves as the catalytic Proton acceptor. A K(+)-binding site is contributed by Asp-125. Thr-128 provides a ligand contact to ATP. Thr-179 lines the substrate pocket.

Belongs to the type III pantothenate kinase family. In terms of assembly, homodimer. It depends on NH4(+) as a cofactor. Requires K(+) as cofactor.

Its subcellular location is the cytoplasm. The catalysed reaction is (R)-pantothenate + ATP = (R)-4'-phosphopantothenate + ADP + H(+). It functions in the pathway cofactor biosynthesis; coenzyme A biosynthesis; CoA from (R)-pantothenate: step 1/5. In terms of biological role, catalyzes the phosphorylation of pantothenate (Pan), the first step in CoA biosynthesis. The protein is Type III pantothenate kinase of Thermotoga sp. (strain RQ2).